The primary structure comprises 323 residues: Aldo-keto reductase family 1 member C1 (323 aa).

NADP(+) is bound by residues 20 to 24 (GFGTY) and D50. Y24 provides a ligand contact to substrate. Y55 (proton donor) is an active-site residue. Residue H117 coordinates substrate. NADP(+) contacts are provided by residues 166–167 (SN), Q190, and 216–222 (YSALGSH). H222 and W227 together coordinate substrate. Residue 270 to 280 (KSYNEQRIRQN) coordinates NADP(+).

It belongs to the aldo/keto reductase family. In terms of assembly, monomer.

Its subcellular location is the cytoplasm. It localises to the cytosol. The catalysed reaction is a 3alpha-hydroxysteroid + NADP(+) = a 3-oxosteroid + NADPH + H(+). It carries out the reaction a 3alpha-hydroxysteroid + NAD(+) = a 3-oxosteroid + NADH + H(+). The enzyme catalyses (17R,20S)-17,20-dihydroxypregn-4-en-3-one + NADP(+) = 17alpha-hydroxyprogesterone + NADPH + H(+). It catalyses the reaction (17R,20S)-17,20-dihydroxypregn-4-en-3-one + NAD(+) = 17alpha-hydroxyprogesterone + NADH + H(+). The catalysed reaction is (20S)-hydroxypregn-4-en-3-one + NADP(+) = progesterone + NADPH + H(+). It carries out the reaction (20S)-hydroxypregn-4-en-3-one + NAD(+) = progesterone + NADH + H(+). The enzyme catalyses (1R,2R)-1,2-dihydrobenzene-1,2-diol + NADP(+) = catechol + NADPH + H(+). It catalyses the reaction (S)-indan-1-ol + NAD(+) = indan-1-one + NADH + H(+). The catalysed reaction is (S)-indan-1-ol + NADP(+) = indan-1-one + NADPH + H(+). It carries out the reaction 5alpha-androstane-3alpha,17beta-diol + NADP(+) = 17beta-hydroxy-5alpha-androstan-3-one + NADPH + H(+). The enzyme catalyses 5alpha-androstane-3beta,17beta-diol + NADP(+) = 17beta-hydroxy-5alpha-androstan-3-one + NADPH + H(+). It catalyses the reaction 5alpha-androstane-3alpha,17beta-diol + NAD(+) = 17beta-hydroxy-5alpha-androstan-3-one + NADH + H(+). The catalysed reaction is 17beta-hydroxy-5alpha-androstan-3-one + NADP(+) = 5alpha-androstan-3,17-dione + NADPH + H(+). It carries out the reaction androsterone + NADP(+) = 5alpha-androstan-3,17-dione + NADPH + H(+). The enzyme catalyses androsterone + NADPH + H(+) = 5alpha-androstane-3alpha,17beta-diol + NADP(+). It catalyses the reaction 5alpha-androstane-3alpha,17beta-diol + NAD(+) = androsterone + NADH + H(+). The catalysed reaction is 17beta-estradiol + NADP(+) = estrone + NADPH + H(+). It carries out the reaction 17beta-estradiol + NAD(+) = estrone + NADH + H(+). The enzyme catalyses testosterone + NADP(+) = androst-4-ene-3,17-dione + NADPH + H(+). It catalyses the reaction 20alpha-hydroxy-5beta-pregnan-3-one + NADP(+) = 5beta-pregnan-3,20-dione + NADPH + H(+). The catalysed reaction is 3beta-hydroxy-5beta-pregnane-20-one + NADP(+) = 5beta-pregnan-3,20-dione + NADPH + H(+). It carries out the reaction 3beta-hydroxy-5beta-pregnane-20-one + NADPH + H(+) = 3beta,20alpha-dihydroxy-5beta-pregnane + NADP(+). The enzyme catalyses (3beta,5alpha,17beta)-3-hydroxyandrostan-17-yl sulfate + NADP(+) = 5alpha-dihydrotestosterone sulfate + NADPH + H(+). Its pathway is steroid metabolism. Its function is as follows. Cytosolic aldo-keto reductase that catalyzes the NADH and NADPH-dependent reduction of ketosteroids to hydroxysteroids. Most probably acts as a reductase in vivo since the oxidase activity measured in vitro is inhibited by physiological concentrations of NADPH. Displays a broad positional specificity acting on positions 3, 17 and 20 of steroids and regulates the metabolism of hormones like estrogens and androgens. May also reduce conjugated steroids such as 5alpha-dihydrotestosterone sulfate. Displays affinity for bile acids. The sequence is that of Aldo-keto reductase family 1 member C1 (AKR1C1) from Pongo abelii (Sumatran orangutan).